We begin with the raw amino-acid sequence, 153 residues long: Heavy metal-associated isoprenylated plant protein 25 (153 aa).

In terms of domain architecture, HMA spans 24-88; it reads LQTVDVRVLI…IIHRTGKRAE (65 aa). Cys35 and Cys38 together coordinate a metal cation. A Cysteine methyl ester modification is found at Cys150. A lipid anchor (S-farnesyl cysteine) is attached at Cys150. Positions 151 to 153 are cleaved as a propeptide — removed in mature form; it reads VVM.

This sequence belongs to the HIPP family. Expressed in roots, shoot apical meristem, trichomes and flower buds.

It localises to the membrane. In terms of biological role, heavy-metal-binding protein. Binds cadmium. May be involved in cadmium transport and play a role in cadmium detoxification. The polypeptide is Heavy metal-associated isoprenylated plant protein 25 (Arabidopsis thaliana (Mouse-ear cress)).